The chain runs to 788 residues: Histidine--tRNA ligase, cytoplasmic (788 aa).

The disordered stretch occupies residues 252 to 286 (PQACEENEAGSSTENPHASGEKPKGDKKSKKKKTL).

The protein belongs to the class-II aminoacyl-tRNA synthetase family. As to quaternary structure, homodimer.

The enzyme catalyses tRNA(His) + L-histidine + ATP = L-histidyl-tRNA(His) + AMP + diphosphate + H(+). The chain is Histidine--tRNA ligase, cytoplasmic from Oryza sativa subsp. japonica (Rice).